The chain runs to 621 residues: Polycystin-2-like protein 2 (621 aa).

Topologically, residues 1-31 (MSEATWWYRGGTSKHDLHYRREAEVNTTLEE) are cytoplasmic. The chain crosses the membrane as a helical span at residues 32–52 (LLLYFIFLINLCILTFGMVNP). Over 53–277 (HMYYLNKVMS…SVKLLRYVSY (225 aa)) the chain is Extracellular. Residues Asn115 and Asn138 are each glycosylated (N-linked (GlcNAc...) asparagine). Residues 278 to 298 (YDYFIASCEVIFCIFLFVFII) form a helical membrane-spanning segment. The Cytoplasmic portion of the chain corresponds to 299–314 (QELRKVNEFKSAYFRS). The chain crosses the membrane as a helical span at residues 315–335 (VWNWLEMLLLLLCFLAVSFYA). The Extracellular portion of the chain corresponds to 336-360 (YCNMQSFLLLGQLLKNTDSYPDFYF). Residues 361 to 381 (LAYWHIYYNNVIAITIFFAWI) traverse the membrane as a helical segment. The Cytoplasmic portion of the chain corresponds to 382–406 (KIFKFISFNETMSQLSSTLSRCMKD). A helical transmembrane segment spans residues 407-427 (IVGFAIMFFIIFSAYAQLGFL). Residues 428-468 (VFGSQVDDFSTFQNSIFAQFRIVLGDFNFAGIQQANWILGP) are Extracellular-facing. The chain crosses the membrane as a helical span at residues 469–489 (IYFITFIFFVFFVLLNMFLAI). The Cytoplasmic portion of the chain corresponds to 490–621 (INDTYSEVKA…KLNQLMRKLH (132 aa)). Residues 521–551 (NVLEKLRLKKAQAKEEKKMQTTDLAQRARRD) adopt a coiled-coil conformation.

This sequence belongs to the polycystin family. As to quaternary structure, interacts with TRPC1 and TRPC5. As to expression, expressed only in testis and heart.

Its subcellular location is the membrane. In terms of biological role, exhibits a lower single conductance but no spontaneous channel activity. May function as a regulator of calcium channels or a channel component involving Ca2(+) homeostasis. The sequence is that of Polycystin-2-like protein 2 from Mus musculus (Mouse).